The chain runs to 188 residues: MSTSETSSYTPDIPSEPVTKTTDTIHIELTPNDLDSLAATRFVRSPSAGATVLFIGTTRDSFNDKAVSSLSYTSYAPLAISTLYKIASNILTKHACTKIAIIHKLGECPIGEESIVIAVSAPHRKAAWLAGEEALEETKDKAEIWKLERFEGGEGVWRANRDGKVGERVDGGIAGLLGRIEVFADTNV.

A compositionally biased stretch (polar residues) spans 1 to 10 (MSTSETSSYT). A disordered region spans residues 1-21 (MSTSETSSYTPDIPSEPVTKT). Substrate-binding positions include 123–124 (HR), Lys-139, and 146–148 (KLE).

The protein belongs to the MoaE family. MOCS2B subfamily. In terms of assembly, heterotetramer; composed of 2 small (MOCS2A) and 2 large (MOCS2B) subunits.

It is found in the cytoplasm. The enzyme catalyses 2 [molybdopterin-synthase sulfur-carrier protein]-C-terminal-Gly-aminoethanethioate + cyclic pyranopterin phosphate + H2O = molybdopterin + 2 [molybdopterin-synthase sulfur-carrier protein]-C-terminal Gly-Gly + 2 H(+). The protein operates within cofactor biosynthesis; molybdopterin biosynthesis. Catalytic subunit of the molybdopterin synthase complex, a complex that catalyzes the conversion of precursor Z into molybdopterin. Acts by mediating the incorporation of 2 sulfur atoms from thiocarboxylated MOCS2A into precursor Z to generate a dithiolene group. This is Molybdopterin synthase catalytic subunit from Phaeosphaeria nodorum (strain SN15 / ATCC MYA-4574 / FGSC 10173) (Glume blotch fungus).